A 422-amino-acid chain; its full sequence is Dihydroorotase (422 aa).

Positions 61 and 63 each coordinate Zn(2+). Residues 63–65 and Asn-95 each bind substrate; that span reads HLR. Position 153 (Asp-153) interacts with Zn(2+). Asn-278 provides a ligand contact to substrate. Residue Asp-305 participates in Zn(2+) binding. The active site involves Asp-305. Residues His-309 and 322–323 each bind substrate; that span reads PG.

It belongs to the metallo-dependent hydrolases superfamily. DHOase family. Class I DHOase subfamily. As to quaternary structure, monomer. Forms a 1:1 stoichiometric complex with PyrB. The complex exists as an equilibrium mixture of heterohexamers, composed of 3 PyrC and 3 PyrB subunits, and dodecamers. The complex has both DHOase and ATCase activities. It depends on Zn(2+) as a cofactor.

It carries out the reaction (S)-dihydroorotate + H2O = N-carbamoyl-L-aspartate + H(+). Its pathway is pyrimidine metabolism; UMP biosynthesis via de novo pathway; (S)-dihydroorotate from bicarbonate: step 3/3. The monomer has very low activity by itself. Activated several thousandfold by formation of a complex with PyrB aspartate carbamoyltransferase (ATCase). In terms of biological role, catalyzes the reversible cyclization of carbamoyl aspartate to dihydroorotate. The polypeptide is Dihydroorotase (Aquifex aeolicus (strain VF5)).